The chain runs to 417 residues: D-amino acid dehydrogenase (417 aa).

An FAD-binding site is contributed by 3–17 (VIVLGSGVIGVTAAW).

This sequence belongs to the DadA oxidoreductase family. The cofactor is FAD.

The enzyme catalyses a D-alpha-amino acid + A + H2O = a 2-oxocarboxylate + AH2 + NH4(+). The protein operates within amino-acid degradation; D-alanine degradation; NH(3) and pyruvate from D-alanine: step 1/1. Oxidative deamination of D-amino acids. This Methylobacillus flagellatus (strain ATCC 51484 / DSM 6875 / VKM B-1610 / KT) protein is D-amino acid dehydrogenase.